The primary structure comprises 179 residues: NADH dehydrogenase [ubiquinone] 1 beta subcomplex subunit 9 (179 aa).

The residue at position 2 (Ala2) is an N-acetylalanine. Ser85 carries the post-translational modification Phosphoserine. The interval 136–162 (EVKQLQEETPPGGPLTEALPPARKEGD) is disordered.

This sequence belongs to the complex I LYR family. Mammalian complex I is composed of 45 different subunits.

It localises to the mitochondrion inner membrane. Functionally, accessory subunit of the mitochondrial membrane respiratory chain NADH dehydrogenase (Complex I), that is believed to be not involved in catalysis. Complex I functions in the transfer of electrons from NADH to the respiratory chain. The immediate electron acceptor for the enzyme is believed to be ubiquinone. The sequence is that of NADH dehydrogenase [ubiquinone] 1 beta subcomplex subunit 9 (NDUFB9) from Homo sapiens (Human).